We begin with the raw amino-acid sequence, 234 residues long: 2-hydroxy-3-keto-5-methylthiopentenyl-1-phosphate phosphatase (234 aa).

It belongs to the HAD-like hydrolase superfamily. MtnX family.

The enzyme catalyses 2-hydroxy-5-methylsulfanyl-3-oxopent-1-enyl phosphate + H2O = 1,2-dihydroxy-5-(methylsulfanyl)pent-1-en-3-one + phosphate. Its pathway is amino-acid biosynthesis; L-methionine biosynthesis via salvage pathway; L-methionine from S-methyl-5-thio-alpha-D-ribose 1-phosphate: step 4/6. Its function is as follows. Dephosphorylates 2-hydroxy-3-keto-5-methylthiopentenyl-1-phosphate (HK-MTPenyl-1-P) yielding 1,2-dihydroxy-3-keto-5-methylthiopentene (DHK-MTPene). The polypeptide is 2-hydroxy-3-keto-5-methylthiopentenyl-1-phosphate phosphatase (Bacillus velezensis (strain DSM 23117 / BGSC 10A6 / LMG 26770 / FZB42) (Bacillus amyloliquefaciens subsp. plantarum)).